The following is a 451-amino-acid chain: CBL-interacting protein kinase 10 (451 aa).

A Protein kinase domain is found at 13–267 (YEIGKLLGQG…VSEIMEDPWF (255 aa)). Residues 19-27 (LGQGSFAKV) and Lys-42 each bind ATP. Asp-135 serves as the catalytic Proton acceptor. The interval 153 to 182 (DFGLSALAECKRQDGLLHTTCGTPAYVAPE) is activation loop. Residues 304-336 (INEGKQEAENLTSLNAFDIISLSSGFDLSAMFE) form the NAF domain. A PPI region spans residues 341–370 (KEESKFTSTNTATTITKKLEDVAKNLRLKF).

This sequence belongs to the protein kinase superfamily. CAMK Ser/Thr protein kinase family. SNF1 subfamily. Mn(2+) serves as cofactor.

The enzyme catalyses L-seryl-[protein] + ATP = O-phospho-L-seryl-[protein] + ADP + H(+). It carries out the reaction L-threonyl-[protein] + ATP = O-phospho-L-threonyl-[protein] + ADP + H(+). In terms of biological role, CIPK serine-threonine protein kinases interact with CBL proteins. Binding of a CBL protein to the regulatory NAF domain of CIPK protein lead to the activation of the kinase in a calcium-dependent manner. In Oryza sativa subsp. japonica (Rice), this protein is CBL-interacting protein kinase 10 (CIPK10).